A 406-amino-acid polypeptide reads, in one-letter code: Transposase for insertion sequence element IS1001 (406 aa).

This sequence belongs to the transposase 12 family.

Functionally, involved in the transposition of the insertion sequence. The chain is Transposase for insertion sequence element IS1001 (tnpA) from Bordetella parapertussis.